Here is a 411-residue protein sequence, read N- to C-terminus: Translation initiation factor 2 subunit gamma (411 aa).

The tr-type G domain occupies 9–203; the sequence is QAEVNIGMVG…AIQDFIPTPK (195 aa). The G1 stretch occupies residues 18 to 25; the sequence is GHVDHGKT. Residues Asp-21, Thr-25, Gly-46, and Ser-48 each coordinate Mg(2+). GTP is bound at residue 21–26; the sequence is DHGKTS. The G2 stretch occupies residues 46 to 50; the sequence is GISIR. 4 residues coordinate Zn(2+): Cys-61, Cys-64, Cys-73, and Cys-76. The G3 stretch occupies residues 90–93; it reads DSPG. GTP-binding positions include 146-149 and 181-183; these read NKID and SAH. The G4 stretch occupies residues 146–149; the sequence is NKID. The G5 stretch occupies residues 181 to 183; it reads SAH.

This sequence belongs to the TRAFAC class translation factor GTPase superfamily. Classic translation factor GTPase family. EIF2G subfamily. In terms of assembly, heterotrimer composed of an alpha, a beta and a gamma chain. Requires Mg(2+) as cofactor.

It carries out the reaction GTP + H2O = GDP + phosphate + H(+). In terms of biological role, eIF-2 functions in the early steps of protein synthesis by forming a ternary complex with GTP and initiator tRNA. The protein is Translation initiation factor 2 subunit gamma of Methanocaldococcus jannaschii (strain ATCC 43067 / DSM 2661 / JAL-1 / JCM 10045 / NBRC 100440) (Methanococcus jannaschii).